The following is a 471-amino-acid chain: Putative multidrug resistance protein MdtD (471 aa).

Topologically, residues 1 to 11 are periplasmic; sequence MTDLPDSTRWQ. A helical membrane pass occupies residues 12–32; that stretch reads LWIVAFGFFMQSLDTTIVNTA. The Cytoplasmic portion of the chain corresponds to 33 to 48; that stretch reads LPSMAQSLGESPLHMH. A helical transmembrane segment spans residues 49-69; the sequence is MVIVSYVLTVAVMLPASGWLA. Over 70 to 76 the chain is Periplasmic; the sequence is DKVGVRN. The helical transmembrane segment at 77–97 threads the bilayer; it reads IFFTAIVLFTLGSLFCALSAT. Over 98–101 the chain is Cytoplasmic; it reads LNEL. A helical membrane pass occupies residues 102-124; it reads LLARALQGVGGAMMVPVGRLTVM. Over 125–137 the chain is Periplasmic; that stretch reads KIVPREQYMAAMT. A helical transmembrane segment spans residues 138–158; it reads FVTLPGQVGPLLGPALGGLLV. The Cytoplasmic segment spans residues 159–164; sequence EYASWH. The helical transmembrane segment at 165–185 threads the bilayer; the sequence is WIFLINIPVGIIGAIATLMLM. Over 186 to 196 the chain is Periplasmic; the sequence is PNYTMQTRRFD. The chain crosses the membrane as a helical span at residues 197-217; the sequence is LSGFLLLAVGMAVLTLALDGS. Over 218-224 the chain is Cytoplasmic; it reads KGTGLSP. Residues 225–245 form a helical membrane-spanning segment; that stretch reads LAIAGLAAIGVVALVLYLLHA. The Periplasmic segment spans residues 246–262; sequence RNNNRALFSLKLFRTRT. The helical transmembrane segment at 263 to 283 threads the bilayer; it reads FSLGLAGSFAGRIGSGMLPFM. Topologically, residues 284–285 are cytoplasmic; it reads TP. Residues 286–306 form a helical membrane-spanning segment; it reads VFLQIGLGFSPFHAGLMMIPM. The Periplasmic portion of the chain corresponds to 307 to 341; it reads VLGSMGMKRIVVQVVNRFGYRRVLVATTLGLSLVT. A helical membrane pass occupies residues 342-362; sequence LLFMTTALLGWYYVLPFVLFL. Residues 363–395 are Cytoplasmic-facing; that stretch reads QGMVNSTRFSSMNTLTLKDLPDNLASSGNSLLS. Residues 396–416 form a helical membrane-spanning segment; sequence MIMQLSMSIGVTIAGLLLGLF. The Periplasmic portion of the chain corresponds to 417–430; the sequence is GSQHVSVDSSTTQT. A helical transmembrane segment spans residues 431-451; the sequence is VFMYTWLSMALIIALPAFIFA. Over 452–471 the chain is Cytoplasmic; the sequence is RVPNDTHQNVAISRRKRSAQ.

The protein belongs to the major facilitator superfamily. TCR/Tet family.

It is found in the cell inner membrane. This Escherichia fergusonii (strain ATCC 35469 / DSM 13698 / CCUG 18766 / IAM 14443 / JCM 21226 / LMG 7866 / NBRC 102419 / NCTC 12128 / CDC 0568-73) protein is Putative multidrug resistance protein MdtD.